A 447-amino-acid polypeptide reads, in one-letter code: Tubulin beta-5 chain (447 aa).

Residues Gln-11, Glu-69, Ser-138, Gly-142, Thr-143, Gly-144, Asn-204, and Asn-226 each contribute to the GTP site. Residue Glu-69 participates in Mg(2+) binding. The segment at 421–447 (EYQQYQDATADDEEEDYGDEEEDEVAA) is disordered. A compositionally biased stretch (acidic residues) spans 429 to 447 (TADDEEEDYGDEEEDEVAA).

Belongs to the tubulin family. As to quaternary structure, dimer of alpha and beta chains. A typical microtubule is a hollow water-filled tube with an outer diameter of 25 nm and an inner diameter of 15 nM. Alpha-beta heterodimers associate head-to-tail to form protofilaments running lengthwise along the microtubule wall with the beta-tubulin subunit facing the microtubule plus end conferring a structural polarity. Microtubules usually have 13 protofilaments but different protofilament numbers can be found in some organisms and specialized cells. Mg(2+) is required as a cofactor. Expressed in roots, leaf sheaths, and suspension cultured cells.

Its subcellular location is the cytoplasm. It is found in the cytoskeleton. In terms of biological role, tubulin is the major constituent of microtubules, a cylinder consisting of laterally associated linear protofilaments composed of alpha- and beta-tubulin heterodimers. Microtubules grow by the addition of GTP-tubulin dimers to the microtubule end, where a stabilizing cap forms. Below the cap, tubulin dimers are in GDP-bound state, owing to GTPase activity of alpha-tubulin. In Oryza sativa subsp. japonica (Rice), this protein is Tubulin beta-5 chain (TUBB5).